A 706-amino-acid polypeptide reads, in one-letter code: Ribosomal RNA large subunit methyltransferase K/L (706 aa).

The region spanning 43–154 is the THUMP domain; sequence LMYQSLLWSR…RDMASVALDL (112 aa).

This sequence belongs to the methyltransferase superfamily. RlmKL family.

It is found in the cytoplasm. It catalyses the reaction guanosine(2445) in 23S rRNA + S-adenosyl-L-methionine = N(2)-methylguanosine(2445) in 23S rRNA + S-adenosyl-L-homocysteine + H(+). The enzyme catalyses guanosine(2069) in 23S rRNA + S-adenosyl-L-methionine = N(2)-methylguanosine(2069) in 23S rRNA + S-adenosyl-L-homocysteine + H(+). Specifically methylates the guanine in position 2445 (m2G2445) and the guanine in position 2069 (m7G2069) of 23S rRNA. The polypeptide is Ribosomal RNA large subunit methyltransferase K/L (Yersinia pseudotuberculosis serotype IB (strain PB1/+)).